Here is a 373-residue protein sequence, read N- to C-terminus: GDP-mannose 4,6-dehydratase (373 aa).

Residues 9-14, 64-65, 86-90, and Tyr-101 each bind NADP(+); these read GVTGQD, DL, and LGAMS. Residue Thr-133 is part of the active site. Active-site nucleophile residues include Glu-135 and Tyr-157. NADP(+) is bound by residues Lys-161, His-187, and Arg-192.

This sequence belongs to the NAD(P)-dependent epimerase/dehydratase family. GDP-mannose 4,6-dehydratase subfamily. Requires NADP(+) as cofactor.

It carries out the reaction GDP-alpha-D-mannose = GDP-4-dehydro-alpha-D-rhamnose + H2O. It participates in nucleotide-sugar biosynthesis; GDP-L-fucose biosynthesis via de novo pathway; GDP-L-fucose from GDP-alpha-D-mannose: step 1/2. Catalyzes the conversion of GDP-D-mannose to GDP-4-dehydro-6-deoxy-D-mannose. This chain is GDP-mannose 4,6-dehydratase, found in Escherichia coli O157:H7.